Reading from the N-terminus, the 259-residue chain is Global transcriptional regulator CodY (259 aa).

The GAF domain stretch occupies residues 1 to 155; that stretch reads MNLLEKTRQL…SATVVGMEIL (155 aa). Positions 203 to 222 form a DNA-binding region, H-T-H motif; it reads ASKIADRVGITRSVIVNALR.

The protein belongs to the CodY family.

The protein localises to the cytoplasm. Its function is as follows. DNA-binding global transcriptional regulator which is involved in the adaptive response to starvation and acts by directly or indirectly controlling the expression of numerous genes in response to nutrient availability. During rapid exponential growth, CodY is highly active and represses genes whose products allow adaptation to nutrient depletion. This Exiguobacterium sp. (strain ATCC BAA-1283 / AT1b) protein is Global transcriptional regulator CodY.